Here is a 461-residue protein sequence, read N- to C-terminus: Phosphomethylpyrimidine synthase (461 aa).

Substrate-binding positions include Asn80, Met109, Tyr139, His175, 195–197 (SRG), 236–239 (DSLR), and Glu275. His279 provides a ligand contact to Zn(2+). Residue Tyr302 coordinates substrate. A Zn(2+)-binding site is contributed by His343. Cys423, Cys426, and Cys431 together coordinate [4Fe-4S] cluster.

It belongs to the ThiC family. The cofactor is [4Fe-4S] cluster.

The catalysed reaction is 5-amino-1-(5-phospho-beta-D-ribosyl)imidazole + S-adenosyl-L-methionine = 4-amino-2-methyl-5-(phosphooxymethyl)pyrimidine + CO + 5'-deoxyadenosine + formate + L-methionine + 3 H(+). It participates in cofactor biosynthesis; thiamine diphosphate biosynthesis. In terms of biological role, catalyzes the synthesis of the hydroxymethylpyrimidine phosphate (HMP-P) moiety of thiamine from aminoimidazole ribotide (AIR) in a radical S-adenosyl-L-methionine (SAM)-dependent reaction. The chain is Phosphomethylpyrimidine synthase from Picosynechococcus sp. (strain ATCC 27264 / PCC 7002 / PR-6) (Agmenellum quadruplicatum).